The chain runs to 284 residues: Elongation factor Ts (284 aa).

An involved in Mg(2+) ion dislocation from EF-Tu region spans residues 80–83; the sequence is TDFV.

It belongs to the EF-Ts family.

The protein localises to the cytoplasm. Its function is as follows. Associates with the EF-Tu.GDP complex and induces the exchange of GDP to GTP. It remains bound to the aminoacyl-tRNA.EF-Tu.GTP complex up to the GTP hydrolysis stage on the ribosome. In Photobacterium profundum (strain SS9), this protein is Elongation factor Ts.